A 371-amino-acid polypeptide reads, in one-letter code: Probable diguanylate cyclase DgcC (371 aa).

Helical transmembrane passes span 46-66 (AVGL…HPPP), 68-88 (WWWL…WQIA), 112-132 (WVGV…IMCL), 143-163 (FVAG…LTGI), and 171-191 (PLEW…FGWV). A GGDEF domain is found at 240 to 371 (RDATLLIIDI…AGRNRTEVAA (132 aa)). Mg(2+)-binding residues include Asp248 and Ile249. Residues Asn256 and Asp265 each contribute to the substrate site. Asp291 contributes to the Mg(2+) binding site.

Mg(2+) is required as a cofactor.

The protein resides in the cell inner membrane. The catalysed reaction is 2 GTP = 3',3'-c-di-GMP + 2 diphosphate. Its pathway is purine metabolism; 3',5'-cyclic di-GMP biosynthesis. Functionally, a probable diguanylate cyclase. The last member of a cascade of expressed proteins, its expression requires DgcM. DgcC production induces biosynthesis of cellulose in some E.coli isolates, but not in K12 strains. Cyclic-di-GMP is a second messenger which controls cell surface-associated traits in bacteria. The protein is Probable diguanylate cyclase DgcC of Escherichia coli (strain K12).